The chain runs to 306 residues: ATP synthase gamma chain (306 aa).

Belongs to the ATPase gamma chain family. F-type ATPases have 2 components, CF(1) - the catalytic core - and CF(0) - the membrane proton channel. CF(1) has five subunits: alpha(3), beta(3), gamma(1), delta(1), epsilon(1). CF(0) has three main subunits: a, b and c.

It is found in the cell membrane. Its function is as follows. Produces ATP from ADP in the presence of a proton gradient across the membrane. The gamma chain is believed to be important in regulating ATPase activity and the flow of protons through the CF(0) complex. The sequence is that of ATP synthase gamma chain from Bifidobacterium adolescentis (strain ATCC 15703 / DSM 20083 / NCTC 11814 / E194a).